A 184-amino-acid chain; its full sequence is UPF0316 protein BLi00691/BL01474 (184 aa).

3 helical membrane passes run glycine 9–leucine 29, leucine 41–leucine 61, and isoleucine 67–isoleucine 87.

It belongs to the UPF0316 family.

Its subcellular location is the cell membrane. In Bacillus licheniformis (strain ATCC 14580 / DSM 13 / JCM 2505 / CCUG 7422 / NBRC 12200 / NCIMB 9375 / NCTC 10341 / NRRL NRS-1264 / Gibson 46), this protein is UPF0316 protein BLi00691/BL01474.